A 37-amino-acid chain; its full sequence is Large ribosomal subunit protein bL36 (37 aa).

It belongs to the bacterial ribosomal protein bL36 family.

This chain is Large ribosomal subunit protein bL36, found in Francisella tularensis subsp. mediasiatica (strain FSC147).